The sequence spans 912 residues: Translation initiation factor IF-2 (912 aa).

Positions 185–204 (NATRPKRKTKEEKQKEREER) are disordered. Positions 193–204 (TKEEKQKEREER) are enriched in basic and acidic residues. In terms of domain architecture, tr-type G spans 411-581 (LRPPIVTIMG…LLEAELLDLK (171 aa)). Residues 420–427 (GHVDHGKT) form a G1 region. A GTP-binding site is contributed by 420–427 (GHVDHGKT). The tract at residues 445–449 (GITQH) is G2. Residues 467 to 470 (DTPG) are G3. GTP is bound by residues 467-471 (DTPGH) and 521-524 (NKID). Residues 521 to 524 (NKID) are G4. A G5 region spans residues 557 to 559 (SAK).

It belongs to the TRAFAC class translation factor GTPase superfamily. Classic translation factor GTPase family. IF-2 subfamily.

Its subcellular location is the cytoplasm. In terms of biological role, one of the essential components for the initiation of protein synthesis. Protects formylmethionyl-tRNA from spontaneous hydrolysis and promotes its binding to the 30S ribosomal subunits. Also involved in the hydrolysis of GTP during the formation of the 70S ribosomal complex. The sequence is that of Translation initiation factor IF-2 from Azobacteroides pseudotrichonymphae genomovar. CFP2.